The chain runs to 366 residues: RISC-loading complex subunit TARBP2 (366 aa).

Sufficient for interaction with PRKRA stretches follow at residues 22 to 105, 152 to 234, and 287 to 366; these read MLAA…EPAL, SPQQ…DARD, and LGAL…AGSK. Residues 30-97 form the DRBM 1 domain; the sequence is TPISLLQEYG…AEVALKHLKG (68 aa). S152 carries the post-translational modification Phosphoserine. DRBM domains are found at residues 159-227 and 293-361; these read NPVG…RVHT and ACCR…YLKI. Positions 228-366 are sufficient for interaction with DICER1; the sequence is VPLDARDGNE…QYLKIMAGSK (139 aa).

The protein belongs to the TARBP2 family. In terms of assembly, self-associates. Component of the RISC loading complex (RLC), or micro-RNA (miRNA) loading complex (miRLC), which is composed of DICER1, AGO2 and TARBP2. Note that the trimeric RLC/miRLC is also referred to as RISC. Interacts with EIF2AK2/PKR and inhibits its protein kinase activity. Interacts with DHX9 and PRKRA. Interacts with DICER1, AGO2, MOV10, EIF6 and RPL7A (60S ribosome subunit); they form a large RNA-induced silencing complex (RISC). Interacts with IRF7; this interaction prevents IRF7 phosphorylation and activation. As to quaternary structure, (Microbial infection) Interacts with FTSJ3; forms a complex with FTSJ3 and HIV-1 TAR RNA. (Microbial infection) Interacts with ebolavirus VP30; this interaction, which occurs only in the presence of siRNA, prevents TARBP2 binding to DICER1 and thus allows the virus to counteract host RNA silencing. In terms of assembly, (Microbial infection) Interacts with ebolavirus VP35; this interaction prevents TARBP2 binding to DICER1 and thus allows the virus to counteract host RNA silencing.

It is found in the cytoplasm. Its subcellular location is the perinuclear region. The protein resides in the nucleus. Its function is as follows. Required for formation of the RNA induced silencing complex (RISC). Component of the RISC loading complex (RLC), also known as the micro-RNA (miRNA) loading complex (miRLC), which is composed of DICER1, AGO2 and TARBP2. Within the RLC/miRLC, DICER1 and TARBP2 are required to process precursor miRNAs (pre-miRNAs) to mature miRNAs and then load them onto AGO2. AGO2 bound to the mature miRNA constitutes the minimal RISC and may subsequently dissociate from DICER1 and TARBP2. May also play a role in the production of short interfering RNAs (siRNAs) from double-stranded RNA (dsRNA) by DICER1. Binds in vitro to the PRM1 3'-UTR. Seems to act as a repressor of translation. For some pre-miRNA substrates, may also alter the choice of cleavage site by DICER1. Negatively regulates IRF7-mediated IFN-beta signaling triggered by viral infection by inhibiting the phosphorylation of IRF7 and promoting its 'Lys'-48-linked ubiquitination and degradation. Functionally, (Microbial infection) Binds to the HIV-1 TAR RNA which is located in the long terminal repeat (LTR) of HIV-1, and stimulates translation of TAR-containing RNAs. This is achieved in part at least by binding to and inhibiting EIF2AK2/PKR, thereby reducing phosphorylation and inhibition of EIF2S1/eIF-2-alpha. May also promote translation of TAR-containing RNAs independently of EIF2AK2/PKR. Mediates recruitment of FTSJ3 methyltransferase to HIV-1 RNA, leading to 2'-O-methylation of the viral genome, allowing HIV-1 to escape the innate immune system. In Homo sapiens (Human), this protein is RISC-loading complex subunit TARBP2.